The primary structure comprises 348 residues: S-adenosylmethionine:tRNA ribosyltransferase-isomerase (348 aa).

Belongs to the QueA family. As to quaternary structure, monomer.

Its subcellular location is the cytoplasm. The enzyme catalyses 7-aminomethyl-7-carbaguanosine(34) in tRNA + S-adenosyl-L-methionine = epoxyqueuosine(34) in tRNA + adenine + L-methionine + 2 H(+). Its pathway is tRNA modification; tRNA-queuosine biosynthesis. Transfers and isomerizes the ribose moiety from AdoMet to the 7-aminomethyl group of 7-deazaguanine (preQ1-tRNA) to give epoxyqueuosine (oQ-tRNA). The protein is S-adenosylmethionine:tRNA ribosyltransferase-isomerase of Polynucleobacter necessarius subsp. necessarius (strain STIR1).